Reading from the N-terminus, the 776-residue chain is Calcium-independent phospholipase A2-gamma (776 aa).

2 stretches are compositionally biased toward basic and acidic residues: residues 226–238 and 307–331; these read RQLQ…EESK and LKSD…ICKD. 2 disordered regions span residues 226–274 and 306–331; these read RQLQ…EALP and KLKS…ICKD. Positions 439-634 constitute a PNPLA domain; sequence LAIDGGGTRG…LLNNPSALAL (196 aa). The short motif at 443–448 is the GXGXXG element; that stretch reads GGGTRG. A helical membrane pass occupies residues 469–489; the sequence is LFDYICGVSTGAILAFMLGLF. The GXSXG signature appears at 475–479; sequence GVSTG. S477 (nucleophile) is an active-site residue. Catalysis depends on D621, which acts as the Proton acceptor. The short motif at 621 to 623 is the DGA/G element; it reads DGG. K730 carries the post-translational modification N6-succinyllysine.

The protein resides in the endoplasmic reticulum membrane. It is found in the microsome membrane. The protein localises to the mitochondrion membrane. It localises to the peroxisome membrane. It carries out the reaction a 1,2-diacyl-sn-glycero-3-phosphocholine + H2O = a 1-acyl-sn-glycero-3-phosphocholine + a fatty acid + H(+). It catalyses the reaction a 1,2-diacyl-sn-glycero-3-phosphocholine + H2O = a 2-acyl-sn-glycero-3-phosphocholine + a fatty acid + H(+). The enzyme catalyses a 1,2-diacyl-sn-glycero-3-phosphoethanolamine + H2O = a 1-acyl-sn-glycero-3-phosphoethanolamine + a fatty acid + H(+). The catalysed reaction is a 1-O-(1Z-alkenyl)-2-acyl-sn-glycero-3-phosphocholine + H2O = a 1-O-(1Z-alkenyl)-sn-glycero-3-phosphocholine + a fatty acid + H(+). It carries out the reaction a 1-acyl-sn-glycero-3-phosphocholine + H2O = sn-glycerol 3-phosphocholine + a fatty acid + H(+). It catalyses the reaction 1-acyl-2-(9Z,12Z)-octadecadienoyl-sn-glycero-3-phosphocholine + H2O = a 1-acyl-sn-glycero-3-phosphocholine + (9Z,12Z)-octadecadienoate + H(+). The enzyme catalyses 1-acyl-2-(5Z,8Z,11Z,14Z-eicosatetraenoyl)-sn-glycero-3-phosphocholine + H2O = a 1-acyl-sn-glycero-3-phosphocholine + (5Z,8Z,11Z,14Z)-eicosatetraenoate + H(+). The catalysed reaction is 1-hexadecanoyl-2-(5Z,8Z,11Z,14Z-eicosatetraenoyl)-sn-glycero-3-phosphocholine + H2O = 1-hexadecanoyl-sn-glycero-3-phosphocholine + (5Z,8Z,11Z,14Z)-eicosatetraenoate + H(+). It carries out the reaction 1-octadecanoyl-2-(9Z-octadecenoyl)-sn-glycero-3-phosphocholine + H2O = 1-octadecanoyl-sn-glycero-3-phosphocholine + (9Z)-octadecenoate + H(+). It catalyses the reaction 1-hexadecanoyl-2-(9Z-octadecenoyl)-sn-glycero-3-phosphocholine + H2O = 1-hexadecanoyl-sn-glycero-3-phosphocholine + (9Z)-octadecenoate + H(+). The enzyme catalyses 1-hexadecanoyl-2-(9Z,12Z-octadecadienoyl)-sn-glycero-3-phosphocholine + H2O = (9Z,12Z)-octadecadienoate + 1-hexadecanoyl-sn-glycero-3-phosphocholine + H(+). The catalysed reaction is 1-acyl-2-(9Z,12Z)-octadecadienoyl-sn-glycero-3-phosphoethanolamine + H2O = a 1-acyl-sn-glycero-3-phosphoethanolamine + (9Z,12Z)-octadecadienoate + H(+). It carries out the reaction 1-acyl-2-(5Z,8Z,11Z,14Z)-eicosatetraenoyl-sn-glycero-3-phosphoethanolamine + H2O = a 1-acyl-sn-glycero-3-phosphoethanolamine + (5Z,8Z,11Z,14Z)-eicosatetraenoate + H(+). It catalyses the reaction 1-hexadecanoyl-2-(5Z,8Z,11Z,14Z-eicosatetraenoyl)-sn-glycero-3-phosphoethanolamine + H2O = 1-hexadecanoyl-sn-glycero-3-phosphoethanolamine + (5Z,8Z,11Z,14Z)-eicosatetraenoate + H(+). The enzyme catalyses 1-hexadecanoyl-2-(5Z,8Z,11Z,14Z-eicosatetraenoyl)-sn-glycero-3-phosphocholine + H2O = 2-(5Z,8Z,11Z,14Z)-eicosatetraenoyl-sn-glycero-3-phosphocholine + hexadecanoate + H(+). The catalysed reaction is 1-octadecanoyl-2-(9Z-octadecenoyl)-sn-glycero-3-phosphocholine + H2O = 2-(9Z-octadecenoyl)-sn-glycero-3-phosphocholine + octadecanoate + H(+). It carries out the reaction 1-hexadecanoyl-2-(4Z,7Z,10Z,13Z,16Z,19Z-docosahexaenoyl)-sn-glycero-3-phosphocholine + H2O = 2-(4Z,7Z,10Z,13Z,16Z,19Z-docosahexaenoyl)-sn-glycero-3-phosphocholine + hexadecanoate + H(+). It catalyses the reaction 1-O-(1Z)-hexadecenyl-2 (5Z,8Z,11Z,14Z)-eicosatetraenoyl-sn-glycero-3-phosphocholine + H2O = 1-(1Z-hexadecenyl)-sn-glycero-3-phosphocholine + (5Z,8Z,11Z,14Z)-eicosatetraenoate + H(+). The enzyme catalyses 1-O-(1Z-hexadecenyl)-2-(9Z-octadecenoyl)-sn-glycero-3-phosphocholine + H2O = 1-(1Z-hexadecenyl)-sn-glycero-3-phosphocholine + (9Z)-octadecenoate + H(+). The catalysed reaction is 1-hexadecanoyl-sn-glycero-3-phosphocholine + H2O = sn-glycerol 3-phosphocholine + hexadecanoate + H(+). It carries out the reaction 1',3'-bis-[1,2-di-(9Z,12Z-octadecadienoyl)-sn-glycero-3-phospho]-glycerol + H2O = 1'-[1,2-di-(9Z,12Z-octadecadienoyl)-sn-glycero-3-phospho]-3'-[1-(9Z,12Z-octadecadienoyl)-sn-glycero-3-phospho]-glycerol + (9Z,12Z)-octadecadienoate + H(+). It catalyses the reaction 1'-[1-acyl-2-(9-hydroxy-(10E,12Z)-octadecadienoyl)-sn-glycero-3-phospho]-3'-[1,2-diacyl-sn-glycero-3-phospho]-glycerol + H2O = 9-hydroxy-(10E,12Z)-octadecadienoate + 1'-[1,2-diacyl-sn-glycero-3-phospho],3'-[1-acyl-sn-glycero-3-phospho]-glycerol + H(+). It participates in phospholipid metabolism. Calcium-independent phospholipase. Its function is as follows. Calcium-independent and membrane-bound phospholipase, that catalyzes the esterolytic cleavage of fatty acids from glycerophospholipids to yield free fatty acids and lysophospholipids, hence regulating membrane physical properties and the release of lipid second messengers and growth factors. Hydrolyzes phosphatidylethanolamine, phosphatidylcholine and probably phosphatidylinositol with a possible preference for the former. Has also a broad substrate specificity in terms of fatty acid moieties, hydrolyzing saturated and mono-unsaturated fatty acids at nearly equal rates from either the sn-1 or sn-2 position in diacyl phosphatidylcholine. However, has a weak activity toward polyunsaturated fatty acids at the sn-2 position, and thereby favors the production of 2-arachidonoyl lysophosphatidylcholine, a key branch point metabolite in eicosanoid signaling. On the other hand, can produce arachidonic acid from the sn-1 position of diacyl phospholipid and from the sn-2 position of arachidonate-containing plasmalogen substrates. Therefore, plays an important role in the mobilization of arachidonic acid in response to cellular stimuli and the generation of lipid second messengers. Can also hydrolyze lysophosphatidylcholine. In the mitochondrial compartment, catalyzes the hydrolysis and release of oxidized aliphatic chains from cardiolipin and integrates mitochondrial bioenergetics and signaling. It is essential for maintaining efficient bioenergetic mitochondrial function through tailoring mitochondrial membrane lipid metabolism and composition. This is Calcium-independent phospholipase A2-gamma from Rattus norvegicus (Rat).